The following is a 459-amino-acid chain: Phosphoglucosamine mutase (459 aa).

Ser-106 functions as the Phosphoserine intermediate in the catalytic mechanism. Residues Ser-106, Asp-247, Asp-249, and Asp-251 each coordinate Mg(2+). A Phosphoserine modification is found at Ser-106.

It belongs to the phosphohexose mutase family. The cofactor is Mg(2+). Post-translationally, activated by phosphorylation.

The catalysed reaction is alpha-D-glucosamine 1-phosphate = D-glucosamine 6-phosphate. Catalyzes the conversion of glucosamine-6-phosphate to glucosamine-1-phosphate. This is Phosphoglucosamine mutase from Chlamydia muridarum (strain MoPn / Nigg).